The sequence spans 43 residues: METATLFAISISCLLVSFTGYALYTAFGQPSEQLRDPFEEHED.

A helical membrane pass occupies residues 5–27 (TLFAISISCLLVSFTGYALYTAF).

It belongs to the PsbN family.

The protein resides in the plastid. It localises to the chloroplast thylakoid membrane. May play a role in photosystem I and II biogenesis. In Thuja plicata (Western red-cedar), this protein is Protein PsbN.